The sequence spans 478 residues: MLLLEFKKTNQTLETIHFIGIGGVGMSGIAEILHNLGYKVQGSDLVENYNTKRLESYGIKIFLGHAEQNITNVSYVVISSAINSNNPEIKEALERKIPIIRRAEMLAELMRLKCSVAVSGSHGKTTTTSLVACLFEAAGLCPTVINGGIINNKSTNAYLGSSNYLIAEADESDATFIHIPSTIAIITNIDPEHLDYYKDFETLIGAFKSFITNLPFYGFAVCCIDHKIVRKLVDDITERKIVTYGIDSEDAHIIAFNINTDIASSTFDVKISLPNVLGTTIIEKITIPTPGRHNILNSLAAIAVGIELDFGIKAIKNGFNNFKGVKRRFTKVAEYNKAVVIDDYAHHPEEIKATLATAKNIADKQNGKVIAIFQPHRYSRMQHLFDDFMLCFNDADMIYITDIYAAGEEPIEGITSQNLVNKITKNKHHDQANFLAELDDAVEVIIDNASSGDMIIMMGAGNISSFANELDGRLSSRT.

120–126 (GSHGKTT) lines the ATP pocket.

It belongs to the MurCDEF family.

It is found in the cytoplasm. It carries out the reaction UDP-N-acetyl-alpha-D-muramate + L-alanine + ATP = UDP-N-acetyl-alpha-D-muramoyl-L-alanine + ADP + phosphate + H(+). It participates in cell wall biogenesis; peptidoglycan biosynthesis. In terms of biological role, cell wall formation. This Rickettsia felis (strain ATCC VR-1525 / URRWXCal2) (Rickettsia azadi) protein is UDP-N-acetylmuramate--L-alanine ligase.